The sequence spans 457 residues: Peptidyl-prolyl cis-trans isomerase FKBP5 (457 aa).

Methionine 1 carries the post-translational modification N-acetylmethionine. Positions 1-26 (MTTDEGAKNSRGNPAATVAEQGEDVT) are disordered. Lysine 28 carries the N6-acetyllysine modification. 2 PPIase FKBP-type domains span residues 50 to 138 (GDRV…LDFK) and 165 to 251 (GARV…KSFE). TPR repeat units follow at residues 268–301 (AAIV…LEME), 317–350 (LAAF…DSAN), and 351–384 (EKGL…NPQN). The interval 421–457 (AKEEANKAMSKKTSEGVTNEKLTASHAVEEEKPEGHV) is disordered. Serine 445 is modified (phosphoserine). Over residues 447–457 (AVEEEKPEGHV) the composition is skewed to basic and acidic residues.

In terms of assembly, part of a heteromultimeric cytoplasmic complex with HSP90AA1, HSPA1A/HSPA1B and steroid receptors. Upon ligand binding dissociates from the complex and FKBP4 takes its place. Interacts with functionally mature heterooligomeric progesterone receptor complexes along with HSP90 and TEBP. Interacts with NR3C1. Interacts with Akt/AKT1 and PHLPP1; enhancing dephosphorylation and subsequent activation of Akt/AKT1. Interacts with IFI44L; this interaction modulates the kinase activity of IKBKB and IKBKE. Interacts with IKBKB and IKBKE. Post-translationally, acetylation impairs ability to promote interaction between Akt/AKT1 and PHLPP1. Deacetylation by SIRT7 promotes interaction between Akt/AKT1 and PHLPP1, leading to suppress Akt/AKT1 activation. Ubiquitinated, leading to degradation in a proteasome-dependent manner. Deubiquitinated by USP49, leading to stabilization.

It is found in the cytoplasm. The protein resides in the nucleus. It catalyses the reaction [protein]-peptidylproline (omega=180) = [protein]-peptidylproline (omega=0). Its activity is regulated as follows. Inhibited by both FK506 and rapamycin. Its function is as follows. Immunophilin protein with PPIase and co-chaperone activities. Component of unligated steroid receptors heterocomplexes through interaction with heat-shock protein 90 (HSP90). Plays a role in the intracellular trafficking of heterooligomeric forms of steroid hormone receptors maintaining the complex into the cytoplasm when unliganded. Acts as a regulator of Akt/AKT1 activity by promoting the interaction between Akt/AKT1 and PHLPP1, thereby enhancing dephosphorylation and subsequent activation of Akt/AKT1. Interacts with IKBKE and IKBKB which facilitates IKK complex assembly leading to increased IKBKE and IKBKB kinase activity, NF-kappaB activation, and IFN production. The polypeptide is Peptidyl-prolyl cis-trans isomerase FKBP5 (FKBP5) (Saimiri boliviensis boliviensis (Bolivian squirrel monkey)).